The primary structure comprises 578 residues: Dapdiamide synthesis protein DdaD (578 aa).

Positions 498-573 constitute a Carrier domain; the sequence is ESISATEHQI…KMAAWLDASS (76 aa). Serine 533 is modified (O-(pantetheine 4'-phosphoryl)serine).

Belongs to the ATP-dependent AMP-binding enzyme family. Requires pantetheine 4'-phosphate as cofactor.

It participates in antibiotic biosynthesis. In terms of biological role, involved in dapdiamide antibiotics biosynthesis. Activates and sequesters N-beta-fumaramoyl-DAP as a covalently tethered thioester for subsequent oxidative modification of the fumaramoyl group. This is Dapdiamide synthesis protein DdaD from Enterobacter agglomerans (Erwinia herbicola).